Here is a 235-residue protein sequence, read N- to C-terminus: MGQKVHPNGMRLGIIKSWHSTWYANNKNFSNNLNNDFEVRKFLLGQLSKALVSRIIIERPAKSIRVTIYTARPGVIIGRKGEDIEKLREKVSKISGVPTKLNISEIRKPELEAKLLADNIASQLERRVIFRRAIKRVVQSAMRLGAKGIKVEVSGRLSGAEIARTEWYREGRVPLHTFRADIDYSLSEAHTSYGVVGVKVWVFKGEILDKVLFHIDKSKDSLINDFSKKKRKSRV.

One can recognise a KH type-2 domain in the interval 39-107 (VRKFLLGQLS…PTKLNISEIR (69 aa)).

The protein belongs to the universal ribosomal protein uS3 family. Part of the 30S ribosomal subunit. Forms a tight complex with proteins S10 and S14.

Binds the lower part of the 30S subunit head. Binds mRNA in the 70S ribosome, positioning it for translation. This is Small ribosomal subunit protein uS3 from Blochmanniella floridana.